Reading from the N-terminus, the 232-residue chain is MGQKVNPIGLRLGINRNWESRWFPSKATLPENIGEDYKIRKFLKTKLYYAGVSQILVERTAKKLRVTVVAARPGIIIGKKGGEIENLRSEVTKLVNKDIAINIKEERKAGSSAQLAAENVAMQLERRVAFRRAMKKVIQGAQKAGAKGIKVSVAGRLGGAEMARTEWYLEGRVPLHTLRARIDYGFAEAHTTYGNIGVKVWIFKGEVLQKGIQADKNEDTSPKKPRRARRGK.

A KH type-2 domain is found at 39-107; that stretch reads IRKFLKTKLY…DIAINIKEER (69 aa). Basic and acidic residues predominate over residues 213–222; sequence QADKNEDTSP. Residues 213 to 232 form a disordered region; it reads QADKNEDTSPKKPRRARRGK. The segment covering 223-232 has biased composition (basic residues); it reads KKPRRARRGK.

This sequence belongs to the universal ribosomal protein uS3 family. As to quaternary structure, part of the 30S ribosomal subunit. Forms a tight complex with proteins S10 and S14.

Functionally, binds the lower part of the 30S subunit head. Binds mRNA in the 70S ribosome, positioning it for translation. The polypeptide is Small ribosomal subunit protein uS3 (Campylobacter fetus subsp. fetus (strain 82-40)).